The primary structure comprises 555 residues: Polypyrimidine tract-binding protein 1 (555 aa).

Methionine 1 is modified (N-acetylmethionine). Serine 16 carries the post-translational modification Phosphoserine. RRM domains are found at residues 58 to 142, 183 to 259, and 361 to 412; these read RVIH…SSPN, LRII…FSKL, and SVLL…SQAQ. Lysine 64 participates in a covalent cross-link: Glycyl lysine isopeptide (Lys-Gly) (interchain with G-Cter in SUMO2). Position 126 is a phosphotyrosine (tyrosine 126). Threonine 137 carries the phosphothreonine modification. Serine 140 carries the post-translational modification Phosphoserine. Lysine 217 is covalently cross-linked (Glycyl lysine isopeptide (Lys-Gly) (interchain with G-Cter in SUMO2)). The tract at residues 435 to 457 is disordered; sequence HQSVQLPREGQEDQGLTKDYGSS. Serine 457 carries the post-translational modification Phosphoserine. In terms of domain architecture, RRM 4 spans 478–553; it reads ATLHLSNIPP…HHLRVSFSKS (76 aa).

As to quaternary structure, monomer. Part of a ternary complex containing KHSRP, PTBP1, PTBP2 and HNRPH1. Interacts with SFPQ. Interacts with RAVER1. Interacts with IVNS1ABP (via BACK domain); the interaction is direct. As to expression, expressed in myoblast; expression gradually decreases during muscle cell differentiation (at protein level).

The protein localises to the nucleus. Plays a role in pre-mRNA splicing and in the regulation of alternative splicing events. Activates exon skipping of its own pre-mRNA during muscle cell differentiation. Binds to the polypyrimidine tract of introns. May promote RNA looping when bound to two separate polypyrimidine tracts in the same pre-mRNA. May promote the binding of U2 snRNP to pre-mRNA. Cooperates with RAVER1 to modulate switching between mutually exclusive exons during maturation of the TPM1 pre-mRNA. Represses the splicing of MAPT/Tau exon 10. Binds to polypyrimidine-rich controlling element (PCE) of CFTR and promotes exon skipping of CFTR exon 9, thereby antagonizing TIA1 and its role in exon inclusion of CFTR exon 9. Plays a role in the splicing of pyruvate kinase PKM by binding repressively to a polypyrimidine tract flanking PKM exon 9, inhibiting exon 9 inclusion and resulting in exon 10 inclusion and production of the PKM M2 isoform. The chain is Polypyrimidine tract-binding protein 1 (Ptbp1) from Mus musculus (Mouse).